Reading from the N-terminus, the 425-residue chain is Protein CLP1 homolog (425 aa).

ATP-binding positions include Glu-18, Lys-59, and 121–126; that span reads DVGKST.

Belongs to the Clp1 family. Clp1 subfamily.

The protein resides in the nucleus. Its function is as follows. Required for endonucleolytic cleavage during polyadenylation-dependent pre-mRNA 3'-end formation. The polypeptide is Protein CLP1 homolog (cbc) (Drosophila persimilis (Fruit fly)).